The following is a 542-amino-acid chain: Excitatory amino acid transporter 1 (542 aa).

Residues 1–47 (MTKSNGEEARLGGRMERFQQGVRKRTLLAKKKVQNITKEDVKSYLFR) lie on the Cytoplasmic side of the membrane. The helical transmembrane segment at 48–68 (NAFVLLTVTAVIVGTILGFTL) threads the bilayer. The Extracellular segment spans residues 69–86 (RPYRMSYREVKYFSFPGE). A helical membrane pass occupies residues 87–108 (LLMRMLQMLVLPLIISSLVTGM). At 109-122 (AALDSKASGKMGMR) the chain is on the cytoplasmic side. A helical membrane pass occupies residues 123-145 (AVVYYMTTTIIAVVIGIIIVIII). Over 146-236 (HPGKGTKENM…ITEELVPVPG (91 aa)) the chain is Extracellular. A helical membrane pass occupies residues 237 to 260 (SVNGVNALGLVVFSMCFGFVIGNM). Topologically, residues 261-269 (KEQGQALRE) are cytoplasmic. Residues 270–297 (FFDSLNEAIMRLVAVIMWYAPLGILFLI) form a helical membrane-spanning segment. Residues 298–318 (AGKIVEMEDMGVIGGQLAMYT) lie on the Extracellular side of the membrane. The chain crosses the membrane as a helical span at residues 319-340 (VTVIVGLLIHAVIVLPLLYFLV). At 341–345 (TRKNP) the chain is on the cytoplasmic side. Positions 346-376 (WVFIGGLLQALITALGTSSSSATLPITFKCL) form an intramembrane region, discontinuously helical. L-aspartate is bound at residue 363–365 (SSS). Residues 377–385 (EENNGVDKR) are Cytoplasmic-facing. Residues 386–412 (VTRFVLPVGATINMDGTALYEALAAIF) form a helical membrane-spanning segment. 3 residues coordinate Na(+): glycine 394, threonine 396, and asparagine 398. Threonine 402 serves as a coordination point for L-aspartate. Residues 413–425 (IAQVNNFELNFGQ) lie on the Extracellular side of the membrane. Positions 426-459 (IITISITATAASIGAAGIPQAGLVTMVIVLTSVG) form an intramembrane region, discontinuously helical. Residue 443-447 (IPQAG) participates in L-aspartate binding. At 460 to 472 (LPTDDITLIIAVD) the chain is on the extracellular side. Residues 473–494 (WFLDRLRTTTNVLGDSLGAGIV) traverse the membrane as a helical segment. L-aspartate-binding residues include aspartate 476 and asparagine 483. Na(+)-binding residues include asparagine 483 and aspartate 487. At 495–542 (EHLSRHELKNRDVEMGNSVIEENEMKKPYQLISQESEIEKSMDSETKM) the chain is on the cytoplasmic side. Serine 512 is modified (phosphoserine).

This sequence belongs to the dicarboxylate/amino acid:cation symporter (DAACS) (TC 2.A.23) family. SLC1A3 subfamily. Homotrimer. Glycosylated.

It is found in the cell membrane. The enzyme catalyses K(+)(in) + L-glutamate(out) + 3 Na(+)(out) + H(+)(out) = K(+)(out) + L-glutamate(in) + 3 Na(+)(in) + H(+)(in). The catalysed reaction is K(+)(in) + L-aspartate(out) + 3 Na(+)(out) + H(+)(out) = K(+)(out) + L-aspartate(in) + 3 Na(+)(in) + H(+)(in). It catalyses the reaction D-aspartate(out) + K(+)(in) + 3 Na(+)(out) + H(+)(out) = D-aspartate(in) + K(+)(out) + 3 Na(+)(in) + H(+)(in). Sodium-dependent, high-affinity amino acid transporter that mediates the uptake of L-glutamate and also L-aspartate and D-aspartate. Functions as a symporter that transports one amino acid molecule together with two or three Na(+) ions and one proton, in parallel with the counter-transport of one K(+) ion. Plays a redundant role in the rapid removal of released glutamate from the synaptic cleft, which is essential for terminating the postsynaptic action of glutamate. The sequence is that of Excitatory amino acid transporter 1 (SLC1A3) from Bos taurus (Bovine).